Here is an 81-residue protein sequence, read N- to C-terminus: Cytochrome b559 subunit alpha (81 aa).

The helical transmembrane segment at 21–35 (VIHSVTIPSLFVGGW) threads the bilayer. Residue His23 participates in heme binding.

It belongs to the PsbE/PsbF family. Heterodimer of an alpha subunit and a beta subunit. PSII is composed of 1 copy each of membrane proteins PsbA, PsbB, PsbC, PsbD, PsbE, PsbF, PsbH, PsbI, PsbJ, PsbK, PsbL, PsbM, PsbT, PsbY, PsbZ, Psb30/Ycf12, at least 3 peripheral proteins of the oxygen-evolving complex and a large number of cofactors. It forms dimeric complexes. Heme b serves as cofactor.

The protein resides in the plastid. It is found in the chloroplast thylakoid membrane. In terms of biological role, this b-type cytochrome is tightly associated with the reaction center of photosystem II (PSII). PSII is a light-driven water:plastoquinone oxidoreductase that uses light energy to abstract electrons from H(2)O, generating O(2) and a proton gradient subsequently used for ATP formation. It consists of a core antenna complex that captures photons, and an electron transfer chain that converts photonic excitation into a charge separation. The polypeptide is Cytochrome b559 subunit alpha (Euglena gracilis).